The primary structure comprises 525 residues: MAEIKPAEISAILKKQVEGFESGATLEEVGSVLQVGDGIARIYGLSNVQYGELVEFDNGLEGIVLNLEEDNVGVVLLGASTGIKEGSTAKRTQRIASLKVGEQMVGRVVNTLGFPIDGKGPIGGDLYEMPLERKAPGVIFRQPVTEPLQTGIKAVDAMIPVGRGQRELVIGDRQTGKSTVCIDTILNQKEFYDAGKPVFCIYVAIGQKASTVAGIAKMLEEKGAMAYTVIVAANASDPAPMQVYAPMAGAAIGEYFRDSGRPALIVYDDLSKQAVAYREVSLLLRRPPGREAYPGDVFYLHSRLLERACKVIADDDIAKNMNDLPDSLKSIVKGGGSLTALPIIETQAGDVSAYIPTNVISITDGQIFLDGDLFNSGVRPAINVGISVSRVGGNAQIKSMKKVAGTLKLDQAQFRELEAFAKFGSDLDAVTLNVIEKGKRNVEILKQGLNSPYTVEDQVAIIYAGSKNLLKNVPVNKVREFEKDFIEYLNNKHRDTLDALKAGKLDDKITDVIEATAKELSAKYN.

Residue 171–178 (GDRQTGKS) coordinates ATP.

This sequence belongs to the ATPase alpha/beta chains family. In terms of assembly, F-type ATPases have 2 components, CF(1) - the catalytic core - and CF(0) - the membrane proton channel. CF(1) has five subunits: alpha(3), beta(3), gamma(1), delta(1), epsilon(1). CF(0) has three main subunits: a(1), b(2) and c(9-12). The alpha and beta chains form an alternating ring which encloses part of the gamma chain. CF(1) is attached to CF(0) by a central stalk formed by the gamma and epsilon chains, while a peripheral stalk is formed by the delta and b chains.

The protein localises to the cell inner membrane. The catalysed reaction is ATP + H2O + 4 H(+)(in) = ADP + phosphate + 5 H(+)(out). Produces ATP from ADP in the presence of a proton gradient across the membrane. The alpha chain is a regulatory subunit. The chain is ATP synthase subunit alpha from Flavobacterium psychrophilum (strain ATCC 49511 / DSM 21280 / CIP 103535 / JIP02/86).